The following is a 546-amino-acid chain: MASVNSRSGFCNSNSTFYSKRTPIPLPPNPSLDVTTFISSQAHRGRIAFIDASTGQNLTFTELWRAVESVADCLSEIGIRKGHVVLLLSPNSILFPVVCLSVMSLGAIITTTNPLNTSNEIAKQIKDSNPVLAFTTSQLLPKISAAAKKLPIVLMDEERVDSVGDVRRLVEMMKKEPSGNRVKERVDQDDTATLLYSSGTTGMSKGVISSHRNLIAMVQTIVNRFGSDDGEQRFICTVPMFHIYGLAAFATGLLAYGSTIIVLSKFEMHEMMSAIGKYQATSLPLVPPILVAMVNGADQIKAKYDLSSMHTVLCGGAPLSKEVTEGFAEKYPTVKILQGYGLTESTGIGASTDTVEESRRYGTAGKLSASMEGRIVDPVTGQILGPKQTGELWLKGPSIMKGYFSNEEATSSTLDSEGWLRTGDLCYIDEDGFIFVVDRLKELIKYKGYQVAPAELEALLLTHPEITDAAVIPFPDKEVGQFPMAYVVRKTGSSLSEKTIMEFVAKQVAPYKRIRKVAFVSSIPKNPSGKILRKDLIKIATSNSKL.

Ser197, Ser198, Gly199, Thr200, Thr201, and Lys205 together coordinate ATP. Lys265 is a CoA binding site. Residues 267–338 (EMHEMMSAIG…EKYPTVKILQ (72 aa)) form an SBD1 region. ATP is bound by residues Gln338, Gly339, Thr343, Asp424, and Arg439. The tract at residues 339 to 403 (GYGLTESTGI…LKGPSIMKGY (65 aa)) is SBD2. Residues Lys447 and Gly448 each contribute to the CoA site. Position 530 (Lys530) interacts with ATP. The Microbody targeting signal motif lies at 544–546 (SKL).

The protein belongs to the ATP-dependent AMP-binding enzyme family. Mg(2+) serves as cofactor. In terms of tissue distribution, expressed at low levels in seedlings, cotyledons, leaves, hypocotyls and roots.

It localises to the peroxisome. The catalysed reaction is (9S,13S,15Z)-12-oxophyto-10,15-dienoate + ATP + CoA = (10Z,15Z)-12-oxophytodienoyl-CoA + AMP + diphosphate. It catalyses the reaction (1S,2S)-OPC-8 + ATP + CoA = OPC8-CoA + AMP + diphosphate. It carries out the reaction hexadecanoate + ATP + CoA = hexadecanoyl-CoA + AMP + diphosphate. The enzyme catalyses (9Z)-octadecenoate + ATP + CoA = (9Z)-octadecenoyl-CoA + AMP + diphosphate. The catalysed reaction is tetradecanoate + ATP + CoA = tetradecanoyl-CoA + AMP + diphosphate. It catalyses the reaction decanoate + ATP + CoA = decanoyl-CoA + AMP + diphosphate. It carries out the reaction dodecanoate + ATP + CoA = dodecanoyl-CoA + AMP + diphosphate. The enzyme catalyses octadecanoate + ATP + CoA = octadecanoyl-CoA + AMP + diphosphate. The catalysed reaction is OPC-6 + ATP + CoA = OPC-6-CoA + AMP + diphosphate. It catalyses the reaction dinor-OPDA + ATP + CoA = dinor-OPDA-CoA + AMP + diphosphate. Its function is as follows. Contributes to jasmonic acid biosynthesis by initiating the beta-oxidative chain shortening of its precursors. Converts 12-oxo-phytodienoic acid (OPDA) and 3-oxo-2-(2'-pentenyl)-cyclopentane-1-octanoic acid (OPC-8:0) into OPDA-CoA and OPC-8:0-CoA, respectively. Follows a two-step reaction mechanism, wherein the carboxylate substrate first undergoes adenylation by ATP, followed by a thioesterification in the presence of CoA to yield the final CoA thioester. The chain is Peroxisomal OPC-8:0-CoA ligase 1 from Arabidopsis thaliana (Mouse-ear cress).